The sequence spans 499 residues: Rhamnogalacturonate lyase A (499 aa).

The signal sequence occupies residues 1 to 20; it reads MLSKTSLLSLLSLAAGVVNA. 2 disulfide bridges follow: Cys49–Cys92 and Cys183–Cys192.

Belongs to the polysaccharide lyase 4 family.

The protein resides in the secreted. The enzyme catalyses Endotype eliminative cleavage of L-alpha-rhamnopyranosyl-(1-&gt;4)-alpha-D-galactopyranosyluronic acid bonds of rhamnogalacturonan I domains in ramified hairy regions of pectin leaving L-rhamnopyranose at the reducing end and 4-deoxy-4,5-unsaturated D-galactopyranosyluronic acid at the non-reducing end.. Pectinolytic enzymes consist of four classes of enzymes: pectin lyase, polygalacturonase, pectin methylesterase and rhamnogalacturonase. Degrades the rhamnogalacturonan I (RG-I) backbone of pectin. The chain is Rhamnogalacturonate lyase A (rglA) from Aspergillus niger.